A 401-amino-acid chain; its full sequence is Phosphoglycerate kinase (401 aa).

Substrate is bound by residues 21-23 (DFN), arginine 36, 59-62 (HLGR), arginine 119, and arginine 160. ATP contacts are provided by residues lysine 212, glutamate 330, and 357 to 360 (GGDS).

It belongs to the phosphoglycerate kinase family. As to quaternary structure, monomer.

It is found in the cytoplasm. It carries out the reaction (2R)-3-phosphoglycerate + ATP = (2R)-3-phospho-glyceroyl phosphate + ADP. Its pathway is carbohydrate degradation; glycolysis; pyruvate from D-glyceraldehyde 3-phosphate: step 2/5. This chain is Phosphoglycerate kinase, found in Limosilactobacillus reuteri subsp. reuteri (strain JCM 1112) (Lactobacillus reuteri).